Here is a 700-residue protein sequence, read N- to C-terminus: AP-2 complex subunit beta (700 aa).

The segment at 625–700 (VGNSFPPTGA…RKLSMKRPFS (76 aa)) is disordered. Position 649 is a phosphoserine (Ser-649). At Thr-652 the chain carries Phosphothreonine. Residues 653 to 663 (AMMDDYDKPAE) show a composition bias toward basic and acidic residues. Ser-683 carries the post-translational modification Phosphoserine.

Belongs to the adaptor complexes large subunit family. As to quaternary structure, adaptor protein complex 2 (AP-2) is a heterotetramer composed of two large adaptins (alpha-type subunit APL3 and beta-type subunit APL1), a medium chain (mu-type subunit APM4) and a small adaptin (sigma-type subunit APS2). Interacts with APS2.

Its subcellular location is the cell membrane. It is found in the membrane. The protein localises to the coated pit. Functionally, adaptins are components of the adaptor complexes which link clathrin to receptors in coated vesicles. Clathrin-associated protein complexes are believed to interact with the cytoplasmic tails of membrane proteins, leading to their selection and concentration. Beta adaptin is a subunit of the plasma membrane adaptor. This chain is AP-2 complex subunit beta (APL1), found in Saccharomyces cerevisiae (strain ATCC 204508 / S288c) (Baker's yeast).